Here is a 101-residue protein sequence, read N- to C-terminus: Large ribosomal subunit protein uL23 (101 aa).

Belongs to the universal ribosomal protein uL23 family. Part of the 50S ribosomal subunit. Contacts protein L29, and trigger factor when it is bound to the ribosome.

Functionally, one of the early assembly proteins it binds 23S rRNA. One of the proteins that surrounds the polypeptide exit tunnel on the outside of the ribosome. Forms the main docking site for trigger factor binding to the ribosome. This Lactobacillus helveticus (strain DPC 4571) protein is Large ribosomal subunit protein uL23.